A 323-amino-acid polypeptide reads, in one-letter code: Phosphoribosylaminoimidazole-succinocarboxamide synthase (323 aa).

It belongs to the SAICAR synthetase family.

It catalyses the reaction 5-amino-1-(5-phospho-D-ribosyl)imidazole-4-carboxylate + L-aspartate + ATP = (2S)-2-[5-amino-1-(5-phospho-beta-D-ribosyl)imidazole-4-carboxamido]succinate + ADP + phosphate + 2 H(+). It functions in the pathway purine metabolism; IMP biosynthesis via de novo pathway; 5-amino-1-(5-phospho-D-ribosyl)imidazole-4-carboxamide from 5-amino-1-(5-phospho-D-ribosyl)imidazole-4-carboxylate: step 1/2. The protein is Phosphoribosylaminoimidazole-succinocarboxamide synthase of Azobacteroides pseudotrichonymphae genomovar. CFP2.